The chain runs to 118 residues: Ribosome-binding factor A (118 aa).

It belongs to the RbfA family. Monomer. Binds 30S ribosomal subunits, but not 50S ribosomal subunits or 70S ribosomes.

The protein localises to the cytoplasm. In terms of biological role, one of several proteins that assist in the late maturation steps of the functional core of the 30S ribosomal subunit. Associates with free 30S ribosomal subunits (but not with 30S subunits that are part of 70S ribosomes or polysomes). Required for efficient processing of 16S rRNA. May interact with the 5'-terminal helix region of 16S rRNA. This Dehalococcoides mccartyi (strain ATCC BAA-2100 / JCM 16839 / KCTC 5957 / BAV1) protein is Ribosome-binding factor A.